The following is a 638-amino-acid chain: MAVAHGPVATSSPEQNGAVPSEATKKDQNLTRGNWGNQIEFVLTSVGYAVGLGNVWRFPYLCYRNGGGAFMFPYFIMLVFCGIPLFFMELSFGQFASQGCLGVWRISPMFKGVGYGMMVVSTYIGIYYNVVICIAFYYFFSSMTHVLPWAYCNNPWNTPDCAGVLDASNLTNGSRPTALSGNLSHLFNYTLQRTSPSEEYWRLYVLKLSDDIGDFGEVRLPLLGCLGVSWVVVFLCLIRGVKSSGKVVYFTATFPYVVLTILFVRGVTLEGAFTGIMYYLTPKWDKILEAKVWGDAASQIFYSLGCAWGGLITMASYNKFHNNCYRDSVIISITNCATSVYAGFVIFSILGFMANHLGVDVSRVADHGPGLAFVAYPEALTLLPISPLWSLLFFFMLILLGLGTQFCLLETLVTAIVDEVGNEWILQKKTYVTLGVAVAGFLLGIPLTSQAGIYWLLLMDNYAASFSLVVISCIMCVSIMYIYGHRNYFQDIQMMLGFPPPLFFQICWRFVSPTIIFFILIFTVIQYRPITYNHYQYPGWAVAIGFLMALSSVICIPLYALFQLCRTDGDTLLQRLKNATKPSRDWGPALLEHRTGRYAPTTTPSPEDGFEVQPLHPDKAQIPIVGSNGSSRLQDSRI.

Residues M1–L30 form a disordered region. Topologically, residues M1 to E40 are cytoplasmic. The next 3 membrane-spanning stretches (helical) occupy residues F41 to L61, G68 to M88, and V120 to F140. Over S141–E217 the chain is Extracellular. N-linked (GlcNAc...) asparagine glycans are attached at residues N169, N172, N182, and N188. The next 9 membrane-spanning stretches (helical) occupy residues V218 to I238, V247 to V267, V292 to I312, S339 to V359, L382 to L402, V438 to L458, Y462 to I482, L502 to F522, and V542 to F562. The Cytoplasmic portion of the chain corresponds to Q563–I638. T603 carries the phosphothreonine modification. S605 and S630 each carry phosphoserine. An essential for interaction with EXOC1 region spans residues S627–I638.

Belongs to the sodium:neurotransmitter symporter (SNF) (TC 2.A.22) family. SLC6A9 subfamily. Interacts with EXOC1; interaction increases the transporter capacity of SLC6A9 probably by promoting its insertion into the cell membrane. Interacts with EXOC3 and EXOC4. As to expression, found only in the white matter of the CNS. Found in the gray matter of CNS as well as in macrophages and mast cells in peripheral tissues.

It localises to the cell membrane. The catalysed reaction is glycine(out) + chloride(out) + 2 Na(+)(out) = glycine(in) + chloride(in) + 2 Na(+)(in). Inhibited by sarcosine. Functionally, sodium- and chloride-dependent glycine transporter. Essential for regulating glycine concentrations at inhibitory glycinergic synapses. This chain is Sodium- and chloride-dependent glycine transporter 1 (Slc6a9), found in Rattus norvegicus (Rat).